Consider the following 174-residue polypeptide: Heat shock protein 22 (174 aa).

One can recognise a sHSP domain in the interval 44–154; the sequence is QIARWQEQEF…TLKEREVTIE (111 aa). Thr-152 is modified (phosphothreonine). The segment at 152–174 is disordered; it reads TIEQTGEPAKKSAEEPNDKAASQ. Over residues 159-174 the composition is skewed to basic and acidic residues; the sequence is PAKKSAEEPNDKAASQ.

This sequence belongs to the small heat shock protein (HSP20) family.

The chain is Heat shock protein 22 (Hsp22) from Drosophila melanogaster (Fruit fly).